A 172-amino-acid chain; its full sequence is RNA silencing suppressor p19 (172 aa).

A compositionally biased stretch (basic and acidic residues) spans 1–20 (MERVIQGNDAREQANGERWD). Residues 1–37 (MERVIQGNDAREQANGERWDGGSGGTTSGFKLPDESP) form a disordered region.

The protein belongs to the tombusvirus protein p19 family. Homodimer.

Viral suppressor of RNA silencing which binds specifically to silencing RNAs (siRNAs). Acts as a molecular caliper to specifically select siRNAs based on the length of the duplex region of the RNA. The protein is RNA silencing suppressor p19 of Cynara cardunculus var. scolymus (Globe artichoke).